The following is a 312-amino-acid chain: Tetraacyldisaccharide 4'-kinase (312 aa).

60–67 contributes to the ATP binding site; that stretch reads IAGGSGKT.

It belongs to the LpxK family.

The catalysed reaction is a lipid A disaccharide + ATP = a lipid IVA + ADP + H(+). It participates in glycolipid biosynthesis; lipid IV(A) biosynthesis; lipid IV(A) from (3R)-3-hydroxytetradecanoyl-[acyl-carrier-protein] and UDP-N-acetyl-alpha-D-glucosamine: step 6/6. In terms of biological role, transfers the gamma-phosphate of ATP to the 4'-position of a tetraacyldisaccharide 1-phosphate intermediate (termed DS-1-P) to form tetraacyldisaccharide 1,4'-bis-phosphate (lipid IVA). The chain is Tetraacyldisaccharide 4'-kinase from Helicobacter pylori (strain HPAG1).